The sequence spans 407 residues: 5-aminolevulinate synthase 2 (407 aa).

Substrate contacts are provided by arginine 21 and serine 137. Serine 189, histidine 217, and threonine 245 together coordinate pyridoxal 5'-phosphate. Lysine 248 is a catalytic residue. Lysine 248 is modified (N6-(pyridoxal phosphate)lysine). The pyridoxal 5'-phosphate site is built by threonine 277 and threonine 278. Threonine 363 contributes to the substrate binding site.

This sequence belongs to the class-II pyridoxal-phosphate-dependent aminotransferase family. As to quaternary structure, homodimer. The cofactor is pyridoxal 5'-phosphate.

The enzyme catalyses succinyl-CoA + glycine + H(+) = 5-aminolevulinate + CO2 + CoA. The protein operates within porphyrin-containing compound metabolism; protoporphyrin-IX biosynthesis; 5-aminolevulinate from glycine: step 1/1. The chain is 5-aminolevulinate synthase 2 (hemT) from Cereibacter sphaeroides (strain ATCC 17023 / DSM 158 / JCM 6121 / CCUG 31486 / LMG 2827 / NBRC 12203 / NCIMB 8253 / ATH 2.4.1.) (Rhodobacter sphaeroides).